A 360-amino-acid polypeptide reads, in one-letter code: UDP-N-acetylglucosamine--N-acetylmuramyl-(pentapeptide) pyrophosphoryl-undecaprenol N-acetylglucosamine transferase (360 aa).

UDP-N-acetyl-alpha-D-glucosamine is bound by residues Ser-198 and Gln-289.

Belongs to the glycosyltransferase 28 family. MurG subfamily.

It localises to the cell membrane. The enzyme catalyses Mur2Ac(oyl-L-Ala-gamma-D-Glu-L-Lys-D-Ala-D-Ala)-di-trans,octa-cis-undecaprenyl diphosphate + UDP-N-acetyl-alpha-D-glucosamine = beta-D-GlcNAc-(1-&gt;4)-Mur2Ac(oyl-L-Ala-gamma-D-Glu-L-Lys-D-Ala-D-Ala)-di-trans,octa-cis-undecaprenyl diphosphate + UDP + H(+). Its pathway is cell wall biogenesis; peptidoglycan biosynthesis. Cell wall formation. Catalyzes the transfer of a GlcNAc subunit on undecaprenyl-pyrophosphoryl-MurNAc-pentapeptide (lipid intermediate I) to form undecaprenyl-pyrophosphoryl-MurNAc-(pentapeptide)GlcNAc (lipid intermediate II). This Streptococcus pyogenes serotype M6 (strain ATCC BAA-946 / MGAS10394) protein is UDP-N-acetylglucosamine--N-acetylmuramyl-(pentapeptide) pyrophosphoryl-undecaprenol N-acetylglucosamine transferase.